Reading from the N-terminus, the 496-residue chain is Probable CtpA-like serine protease (496 aa).

Over residues M1 to E16 the composition is skewed to basic and acidic residues. The tract at residues M1–N27 is disordered. Residues A18–N27 show a composition bias toward polar residues. A helical transmembrane segment spans residues F39–I59. The PDZ domain maps to T124 to G206. Catalysis depends on charge relay system residues S329, D340, and K354.

It belongs to the peptidase S41A family.

The protein resides in the cell membrane. The polypeptide is Probable CtpA-like serine protease (Staphylococcus aureus (strain Mu50 / ATCC 700699)).